The sequence spans 238 residues: Transcriptional activator protein AnoR (238 aa).

Positions 170-236 (EFSQFNLYLT…SAAIRAVMLG (67 aa)) constitute an HTH luxR-type domain. Residues 195–214 (SAEIAQIIGVTERTVNFHLC) constitute a DNA-binding region (H-T-H motif).

It belongs to the autoinducer-regulated transcriptional regulatory protein family.

Its function is as follows. Positively regulates the expression of anoI. Required for biofilm formation and motility. Probably part of a quorum-sensing system with AnoI. This chain is Transcriptional activator protein AnoR, found in Acinetobacter nosocomialis.